Reading from the N-terminus, the 85-residue chain is Cytochrome c2 (85 aa).

Positions 12, 15, 16, and 61 each coordinate heme c.

Belongs to the cytochrome c family. Post-translationally, binds 1 heme c group covalently per subunit.

Functionally, cytochrome c2 is found mainly in purple, non-sulfur, photosynthetic bacteria where it functions as the electron donor to the oxidized bacteriochlorophyll in the photophosphorylation pathway. However, it may also have a role in the respiratory chain and is found in some non-photosynthetic bacteria. In Rubrivivax gelatinosus (Rhodocyclus gelatinosus), this protein is Cytochrome c2.